A 417-amino-acid chain; its full sequence is MSGSNTAISRRRLLQGAGAMWLLSVSQVSLAAVSQVVAVRVWPASSYTRVTVESNRQLKYKQFALSNPERVVVDIEDVNLNSVLKGMAAQIRADDPFIKSARVGQFDPQTVRMVFELKQNVKPQLFALAPVAGFKERLVMDLYPANAQDMQDPLLALLEDYNKGDLEKQVPPAQSGPQPGKAGRDRPIVIMLDPGHGGEDSGAVGKYKTREKDVVLQIARRLRSLIEKEGNMKVYMTRNEDIFIPLQVRVAKAQKQRADLFVSIHADAFTSRQPSGSSVFALSTKGATSTAAKYLAQTQNASDLIGGVSKSGDRYVDHTMFDMVQSLTIADSLKFGKAVLNKLGKINKLHKNQVEQAGFAVLKAPDIPSILVETAFISNVEEERKLKTATFQQEVAESILAGIKAYFADGATLARRG.

The tat-type signal signal peptide spans 1–31 (MSGSNTAISRRRLLQGAGAMWLLSVSQVSLA). A disordered region spans residues 166 to 185 (LEKQVPPAQSGPQPGKAGRD). A MurNAc-LAA domain is found at 190–404 (IMLDPGHGGE…VAESILAGIK (215 aa)).

Belongs to the N-acetylmuramoyl-L-alanine amidase 3 family. In terms of processing, predicted to be exported by the Tat system. The position of the signal peptide cleavage has not been experimentally proven.

Its subcellular location is the periplasm. It catalyses the reaction Hydrolyzes the link between N-acetylmuramoyl residues and L-amino acid residues in certain cell-wall glycopeptides.. Functionally, cell-wall hydrolase involved in septum cleavage during cell division. The protein is N-acetylmuramoyl-L-alanine amidase AmiC (amiC) of Escherichia coli O6:H1 (strain CFT073 / ATCC 700928 / UPEC).